A 474-amino-acid chain; its full sequence is Glutamate--tRNA ligase (474 aa).

The short motif at 9-19 (PSPTGYLHVGG) is the 'HIGH' region element. A 'KMSKS' region motif is present at residues 240 to 244 (KLSKR). Residue Lys-243 participates in ATP binding.

The protein belongs to the class-I aminoacyl-tRNA synthetase family. Glutamate--tRNA ligase type 1 subfamily. As to quaternary structure, monomer.

The protein resides in the cytoplasm. The enzyme catalyses tRNA(Glu) + L-glutamate + ATP = L-glutamyl-tRNA(Glu) + AMP + diphosphate. Functionally, catalyzes the attachment of glutamate to tRNA(Glu) in a two-step reaction: glutamate is first activated by ATP to form Glu-AMP and then transferred to the acceptor end of tRNA(Glu). The chain is Glutamate--tRNA ligase from Vibrio parahaemolyticus serotype O3:K6 (strain RIMD 2210633).